A 131-amino-acid polypeptide reads, in one-letter code: Small ribosomal subunit protein uS8 (131 aa).

It belongs to the universal ribosomal protein uS8 family. Part of the 30S ribosomal subunit. Contacts proteins S5 and S12.

Functionally, one of the primary rRNA binding proteins, it binds directly to 16S rRNA central domain where it helps coordinate assembly of the platform of the 30S subunit. The chain is Small ribosomal subunit protein uS8 from Laribacter hongkongensis (strain HLHK9).